A 609-amino-acid chain; its full sequence is Manganese lipoxygenase (609 aa).

The first 16 residues, 1–16, serve as a signal peptide directing secretion; that stretch reads MRLLLSIAGLTTVVNA. N-linked (GlcNAc...) asparagine glycosylation is found at asparagine 24, asparagine 115, asparagine 156, and asparagine 193. The Lipoxygenase domain maps to 117–609; sequence SLKAIQDHGG…PGVIPFYLSV (493 aa). Residues histidine 289 and histidine 294 each coordinate Mn(2+). N-linked (GlcNAc...) asparagine glycosylation is present at asparagine 385. Mn(2+) is bound by residues histidine 474 and asparagine 478. Asparagine 539 is a glycosylation site (N-linked (GlcNAc...) asparagine). Valine 609 contributes to the Mn(2+) binding site.

This sequence belongs to the lipoxygenase family. Manganese lipoxygenase subfamily. The cofactor is Mn(2+). N- and O-glycosylated.

Its subcellular location is the secreted. It carries out the reaction (9Z,12Z)-octadecadienoate + O2 = (9S)-hydroperoxy-(10E,12Z)-octadecadienoate. It catalyses the reaction (9Z,12Z)-octadecadienoate + O2 = (11S)-hydroperoxy-(9Z,12Z)-octadecadienoate. The catalysed reaction is (9Z,12Z)-octadecadienoate + O2 = (13R)-hydroperoxy-(9Z,11E)-octadecadienoate. The enzyme catalyses (9Z,12Z,15Z)-octadecatrienoate + O2 = (11R)-hydroperoxy-(9Z,12Z,15Z)-octadecatrienoate. In terms of biological role, lipoxygenase that metabolizes linoleic and alpha-linolenic acids to 9-, 11- and 13-hydroperoxy fatty acids. Oxidizes linoleic acid to mainly 9S- and 13R-HPODE and alpha-linolenic acid to 11R-HPOTrE. In Colletotrichum gloeosporioides (strain Cg-14) (Anthracnose fungus), this protein is Manganese lipoxygenase.